Reading from the N-terminus, the 372-residue chain is Glutamate 5-kinase (372 aa).

ATP is bound at residue K6. The substrate site is built by S46, D133, and N145. ATP contacts are provided by residues 165 to 166 (TD) and 207 to 213 (TGGMYTK). In terms of domain architecture, PUA spans 272 to 350 (NGFLFVDEGA…HDIESILGYK (79 aa)).

This sequence belongs to the glutamate 5-kinase family.

It localises to the cytoplasm. It catalyses the reaction L-glutamate + ATP = L-glutamyl 5-phosphate + ADP. The protein operates within amino-acid biosynthesis; L-proline biosynthesis; L-glutamate 5-semialdehyde from L-glutamate: step 1/2. In terms of biological role, catalyzes the transfer of a phosphate group to glutamate to form L-glutamate 5-phosphate. This chain is Glutamate 5-kinase, found in Caldanaerobacter subterraneus subsp. tengcongensis (strain DSM 15242 / JCM 11007 / NBRC 100824 / MB4) (Thermoanaerobacter tengcongensis).